The primary structure comprises 1045 residues: FERM, ARHGEF and pleckstrin domain-containing protein 1 (1045 aa).

Residues 1-37 (MGEIEQRPTPGSRLGAPENSGISTLERGQKPPPTPSG) form a disordered region. 2 positions are modified to phosphoserine: serine 20 and serine 23. Threonine 24 is subject to Phosphothreonine. The FERM domain occupies 40–320 (VSIKIQMLDD…EHHAFFRLFE (281 aa)). Phosphoserine occurs at positions 340, 373, 389, 403, 418, 427, and 433. The interval 392–534 (SASLTFGEGA…TDDEDEGRRK (143 aa)) is disordered. 2 stretches are compositionally biased toward polar residues: residues 471-489 (TGSLTGSPHLSELSVNSQG) and 496-511 (VTLSPNLSPDTKQASP). A phosphoserine mark is found at serine 510 and serine 514. The region spanning 540-730 (KAYFIAKEVS…TEMVAQLHGT (191 aa)) is the DH domain. Residues 759-856 (EFIRLGSLSK…WVEDIQMAID (98 aa)) form the PH 1 domain. Phosphoserine occurs at positions 833, 872, and 878. The interval 866–902 (PEFLASSPPDNKSPDEATAADQESEDDLSASRTSLER) is disordered. Threonine 883 carries the phosphothreonine modification. 3 positions are modified to phosphoserine: serine 889, serine 896, and serine 899. The PH 2 domain occupies 932-1029 (ENQLSGNLLR…WMEVIRSATS (98 aa)).

As to quaternary structure, interacts with CADM1. Interacts with RAC1.

It localises to the cell membrane. The protein localises to the synapse. It is found in the synaptosome. Its subcellular location is the cytoplasm. The protein resides in the cytosol. It localises to the cell projection. The protein localises to the filopodium. It is found in the dendrite. Its subcellular location is the dendritic spine. Functions as a guanine nucleotide exchange factor for RAC1. May play a role in semaphorin signaling. Plays a role in the assembly and disassembly of dendritic filopodia, the formation of dendritic spines, regulation of dendrite length and ultimately the formation of synapses. The chain is FERM, ARHGEF and pleckstrin domain-containing protein 1 (FARP1) from Pongo abelii (Sumatran orangutan).